The sequence spans 463 residues: FAD-dependent monooxygenase nodM (463 aa).

A helical transmembrane segment spans residues 5 to 25; sequence EFKVIIVGGSLAGLTLAHCLL. Positions 35, 49, 108, 305, and 318 each coordinate FAD. Residues 438 to 458 form a helical membrane-spanning segment; that stretch reads ILLGFTGVFTSALAMVVLLHI.

Belongs to the paxM FAD-dependent monooxygenase family. FAD is required as a cofactor.

It localises to the membrane. The protein operates within secondary metabolite biosynthesis. Functionally, FAD-dependent monooxygenase; part of the gene cluster that mediates the biosynthesis of the indole diterpenes nodulisporic acids (NA). Nodulisporic acid A (NAA) and its chemically modified derivatives are of particular significance because of their highly potent insecticidal activity against blood-feeding arthropods and lack of observable adverse effects on mammals, in particular the tremogenicity associated with the paspaline-derived IDTs is not observed. The geranylgeranyl diphosphate (GGPP) synthase ggs1, localized outside of the cluster, is proposed to catalyze the first step in nodulisporic acid biosynthesis via conversion of farnesyl pyrophosphate and isopentyl pyrophosphate into geranylgeranyl pyrophosphate (GGPP). Condensation of indole-3-glycerol phosphate with GGPP by the prenyl transferase nodC then forms 3-geranylgeranylindole (3-GGI). Epoxidation by the FAD-dependent monooxygenase nodM leads to a single-epoxidized-GGI that is substrate of the terpene cyclase nodB for cyclization to yield emindole SB. The terminal methyl carbon, C28, of emindole SB is then oxidized by the cytochrome P450 monooxygenase nodW to produce nodulisporic acid F (NAF), the pentacyclic core of NAA. NAF is converted to nodulisporic acid E (NAE) via prenylation. This step is probably performed by one of the indole diterpene prenyltransferases nodD1 or nodD2. Several oxidation steps performed by the FAD-linked oxidoreductase nodO and one of the cytochrome P450 monooxygenase nodR, nodX or nodZ further convert NAE to nodulisporic acid D (NAD). NAD is substrate of cytochrome P450 monooxygenase nodJ to produce the precursor of nodulisporic acid C (NAC), converted to NAC by one of the indole diterpene prenyltransferases nodD1 or nodD2. The FAD-dependent monooxygenase nodY2 then oxidizes NAC to nodulisporic acid B (NAB). Finally NAB is converted to NAA by one of the cytochrome P450 monooxygenases nodR, nodX or nodZ. The protein is FAD-dependent monooxygenase nodM of Hypoxylon pulicicidum.